The sequence spans 166 residues: Urease accessory protein UreE (166 aa).

Residues 135 to 156 (EQGAYGGGHHHSHHGDEEFNYG) are disordered.

The protein belongs to the UreE family.

The protein localises to the cytoplasm. Involved in urease metallocenter assembly. Binds nickel. Probably functions as a nickel donor during metallocenter assembly. This is Urease accessory protein UreE from Ectopseudomonas mendocina (strain ymp) (Pseudomonas mendocina).